Consider the following 286-residue polypeptide: uncharacterized protein (286 aa).

Residues Met1 to Ala47 form a disordered region. The span at Gly9–Asn26 shows a compositional bias: basic and acidic residues. Gly93–Thr100 is a binding site for GTP.

This sequence belongs to the SIMIBI class G3E GTPase family. UreG subfamily.

Its subcellular location is the cytoplasm. It localises to the nucleus. In terms of biological role, probably facilitates nickel incorporation. This is an uncharacterized protein from Schizosaccharomyces pombe (strain 972 / ATCC 24843) (Fission yeast).